A 33-amino-acid polypeptide reads, in one-letter code: Cytochrome b6-f complex subunit 6 (33 aa).

Residues 4–24 (ITIISYFGFLLASIIFTLVLF) traverse the membrane as a helical segment.

Belongs to the PetL family. The 4 large subunits of the cytochrome b6-f complex are cytochrome b6, subunit IV (17 kDa polypeptide, PetD), cytochrome f and the Rieske protein, while the 4 small subunits are PetG, PetL, PetM and PetN. The complex functions as a dimer.

The protein localises to the plastid. The protein resides in the chloroplast thylakoid membrane. Component of the cytochrome b6-f complex, which mediates electron transfer between photosystem II (PSII) and photosystem I (PSI), cyclic electron flow around PSI, and state transitions. PetL is important for photoautotrophic growth as well as for electron transfer efficiency and stability of the cytochrome b6-f complex. This chain is Cytochrome b6-f complex subunit 6, found in Pinus thunbergii (Japanese black pine).